Reading from the N-terminus, the 353-residue chain is Carbamoyl phosphate synthase small chain (353 aa).

Residues Met-1–Thr-166 are CPSase. L-glutamine-binding residues include Ser-45, Gly-214, and Gly-216. Positions Thr-166–Pro-349 constitute a Glutamine amidotransferase type-1 domain. The Nucleophile role is filled by Cys-241. Leu-242, Gln-245, Asn-283, Gly-285, and Tyr-286 together coordinate L-glutamine. Catalysis depends on residues His-322 and Glu-324.

The protein belongs to the CarA family. Composed of two chains; the small (or glutamine) chain promotes the hydrolysis of glutamine to ammonia, which is used by the large (or ammonia) chain to synthesize carbamoyl phosphate. Tetramer of heterodimers (alpha,beta)4.

The enzyme catalyses hydrogencarbonate + L-glutamine + 2 ATP + H2O = carbamoyl phosphate + L-glutamate + 2 ADP + phosphate + 2 H(+). The catalysed reaction is L-glutamine + H2O = L-glutamate + NH4(+). It functions in the pathway amino-acid biosynthesis; L-arginine biosynthesis; carbamoyl phosphate from bicarbonate: step 1/1. The protein operates within pyrimidine metabolism; UMP biosynthesis via de novo pathway; (S)-dihydroorotate from bicarbonate: step 1/3. In terms of biological role, small subunit of the glutamine-dependent carbamoyl phosphate synthetase (CPSase). CPSase catalyzes the formation of carbamoyl phosphate from the ammonia moiety of glutamine, carbonate, and phosphate donated by ATP, constituting the first step of 2 biosynthetic pathways, one leading to arginine and/or urea and the other to pyrimidine nucleotides. The small subunit (glutamine amidotransferase) binds and cleaves glutamine to supply the large subunit with the substrate ammonia. This Halobacterium salinarum (strain ATCC 29341 / DSM 671 / R1) protein is Carbamoyl phosphate synthase small chain.